The sequence spans 106 residues: Large ribosomal subunit protein uL24 (106 aa).

It belongs to the universal ribosomal protein uL24 family. Part of the 50S ribosomal subunit.

Its function is as follows. One of two assembly initiator proteins, it binds directly to the 5'-end of the 23S rRNA, where it nucleates assembly of the 50S subunit. One of the proteins that surrounds the polypeptide exit tunnel on the outside of the subunit. The sequence is that of Large ribosomal subunit protein uL24 from Polaromonas sp. (strain JS666 / ATCC BAA-500).